The sequence spans 395 residues: Elongation factor Tu (395 aa).

The tr-type G domain occupies 10 to 204 (KPHVNIGTIG…AVDSYIPTPE (195 aa)). The interval 19 to 26 (GHVDHGKT) is G1. A GTP-binding site is contributed by 19–26 (GHVDHGKT). Mg(2+) is bound at residue Thr26. Positions 60–64 (GITIS) are G2. The interval 81-84 (DCPG) is G3. Residues 81-85 (DCPGH) and 136-139 (NKCD) contribute to the GTP site. The G4 stretch occupies residues 136 to 139 (NKCD). The tract at residues 174 to 176 (SAL) is G5.

It belongs to the TRAFAC class translation factor GTPase superfamily. Classic translation factor GTPase family. EF-Tu/EF-1A subfamily. As to quaternary structure, monomer. Post-translationally, phosphorylated on serine and/or threonine residue(s). Dephosphorylated by stp.

The protein resides in the cytoplasm. It carries out the reaction GTP + H2O = GDP + phosphate + H(+). In terms of biological role, GTP hydrolase that promotes the GTP-dependent binding of aminoacyl-tRNA to the A-site of ribosomes during protein biosynthesis. This Listeria innocua serovar 6a (strain ATCC BAA-680 / CLIP 11262) protein is Elongation factor Tu.